Here is a 196-residue protein sequence, read N- to C-terminus: Molybdenum cofactor guanylyltransferase (196 aa).

GTP-binding positions include 12-14 (LAG), K25, N53, D71, and D101. D101 serves as a coordination point for Mg(2+).

This sequence belongs to the MobA family. In terms of assembly, monomer. Mg(2+) serves as cofactor.

It is found in the cytoplasm. The catalysed reaction is Mo-molybdopterin + GTP + H(+) = Mo-molybdopterin guanine dinucleotide + diphosphate. Transfers a GMP moiety from GTP to Mo-molybdopterin (Mo-MPT) cofactor (Moco or molybdenum cofactor) to form Mo-molybdopterin guanine dinucleotide (Mo-MGD) cofactor. The chain is Molybdenum cofactor guanylyltransferase from Bordetella petrii (strain ATCC BAA-461 / DSM 12804 / CCUG 43448).